We begin with the raw amino-acid sequence, 556 residues long: Urocanate hydratase (556 aa).

NAD(+) is bound by residues 52-53 (GG), Gln130, 176-178 (GMG), Glu196, Arg201, 242-243 (NA), 263-267 (QTSAH), 273-274 (YL), and Tyr322. Residue Cys410 is part of the active site. Gly492 contacts NAD(+).

The protein belongs to the urocanase family. The cofactor is NAD(+).

The protein localises to the cytoplasm. It carries out the reaction 4-imidazolone-5-propanoate = trans-urocanate + H2O. It participates in amino-acid degradation; L-histidine degradation into L-glutamate; N-formimidoyl-L-glutamate from L-histidine: step 2/3. Catalyzes the conversion of urocanate to 4-imidazolone-5-propionate. This Shewanella sp. (strain ANA-3) protein is Urocanate hydratase.